The sequence spans 387 residues: Pepsin-3 (387 aa).

Residues 1–15 (MKWLLLLGLLALSEC) form the signal peptide. The propeptide at 16–59 (IIHKVPLVRKKSLRKNLIEKGLLKDYLKTHTPNLATKYLPKAAF) is activation peptide. Residues 75–384 (YFGTIGIGTP…DRANNQLGLA (310 aa)) enclose the Peptidase A1 domain. D93 is an active-site residue. 2 disulfide bridges follow: C106–C111 and C267–C271. Residue D276 is part of the active site. C310 and C343 are oxidised to a cystine.

This sequence belongs to the peptidase A1 family.

It localises to the secreted. It catalyses the reaction Preferential cleavage: hydrophobic, preferably aromatic, residues in P1 and P1' positions. Cleaves 1-Phe-|-Val-2, 4-Gln-|-His-5, 13-Glu-|-Ala-14, 14-Ala-|-Leu-15, 15-Leu-|-Tyr-16, 16-Tyr-|-Leu-17, 23-Gly-|-Phe-24, 24-Phe-|-Phe-25 and 25-Phe-|-Tyr-26 bonds in the B chain of insulin.. In terms of biological role, shows particularly broad specificity; although bonds involving phenylalanine and leucine are preferred, many others are also cleaved to some extent. The polypeptide is Pepsin-3 (Oryctolagus cuniculus (Rabbit)).